The primary structure comprises 95 residues: Osteocalcin 1 (95 aa).

A signal peptide spans 1–21 (MKTLSVLVLCSLAVLCLTSDA). Residues 22-50 (SFSSQPAVDTPAQEGLFVEQEQASSVVRQ) constitute a propeptide that is removed on maturation. One can recognise a Gla domain in the interval 45–91 (SSVVRQAPKELSLSQLESLREVCELNLACEDMMDTSGIIAAYTTYYG). Residues E61, E65, and E68 each coordinate Ca(2+). E61, E65, and E68 each carry 4-carboxyglutamate. C67 and C73 are disulfide-bonded.

It belongs to the osteocalcin/matrix Gla protein family. Gamma-carboxyglutamate residues are formed by vitamin K dependent carboxylation by GGCX. These residues are essential for the binding of calcium.

The protein resides in the secreted. Functionally, the carboxylated form is one of the main organic components of the bone matrix, which constitutes 1-2% of the total bone protein. The carboxylated form binds strongly to apatite and calcium. This is Osteocalcin 1 from Solea senegalensis (Senegalese sole).